A 122-amino-acid chain; its full sequence is Small ribosomal subunit protein bS6 (122 aa).

This sequence belongs to the bacterial ribosomal protein bS6 family.

In terms of biological role, binds together with bS18 to 16S ribosomal RNA. This is Small ribosomal subunit protein bS6 from Vibrio cholerae serotype O1 (strain ATCC 39541 / Classical Ogawa 395 / O395).